The primary structure comprises 108 residues: Protein YcgL (108 aa).

The YcgL domain occupies 12–96 (MFCVIYRSSK…SPEDLLKQHL (85 aa)).

This is Protein YcgL from Shigella dysenteriae serotype 1 (strain Sd197).